Consider the following 418-residue polypeptide: Probable endo-beta-1,4-glucanase celB (418 aa).

The N-terminal stretch at 1–18 (MVRTFAVTALALLPLVAA) is a signal peptide. N-linked (GlcNAc...) asparagine glycosylation is found at N46, N118, and N136. E215 functions as the Nucleophile in the catalytic mechanism. Catalysis depends on E220, which acts as the Proton donor. N-linked (GlcNAc...) asparagine glycosylation is found at N234 and N291.

This sequence belongs to the glycosyl hydrolase 7 (cellulase C) family.

Its subcellular location is the secreted. The catalysed reaction is Endohydrolysis of (1-&gt;4)-beta-D-glucosidic linkages in cellulose, lichenin and cereal beta-D-glucans.. Functionally, has endoglucanase activity on substrates containing beta-1,4 glycosidic bonds, like in carboxymethylcellulose (CMC), hydroxyethylcellulose (HEC) and beta-glucan. Involved in the degradation of complex natural cellulosic substrates. This Aspergillus clavatus (strain ATCC 1007 / CBS 513.65 / DSM 816 / NCTC 3887 / NRRL 1 / QM 1276 / 107) protein is Probable endo-beta-1,4-glucanase celB (celB).